We begin with the raw amino-acid sequence, 1141 residues long: DNA-directed RNA polymerase subunit beta (1141 aa).

This sequence belongs to the RNA polymerase beta chain family. As to quaternary structure, the RNAP catalytic core consists of 2 alpha, 1 beta, 1 beta' and 1 omega subunit. When a sigma factor is associated with the core the holoenzyme is formed, which can initiate transcription.

The catalysed reaction is RNA(n) + a ribonucleoside 5'-triphosphate = RNA(n+1) + diphosphate. DNA-dependent RNA polymerase catalyzes the transcription of DNA into RNA using the four ribonucleoside triphosphates as substrates. This is DNA-directed RNA polymerase subunit beta from Frankia casuarinae (strain DSM 45818 / CECT 9043 / HFP020203 / CcI3).